A 359-amino-acid chain; its full sequence is Methionine import ATP-binding protein MetN (359 aa).

Residues Met1–Gly21 form a disordered region. An ABC transporter domain is found at Val24–Val264. Residue Gly61–Ser68 participates in ATP binding.

It belongs to the ABC transporter superfamily. Methionine importer (TC 3.A.1.24) family. In terms of assembly, the complex is composed of two ATP-binding proteins (MetN), two transmembrane proteins (MetI) and a solute-binding protein (MetQ).

Its subcellular location is the cell membrane. The catalysed reaction is L-methionine(out) + ATP + H2O = L-methionine(in) + ADP + phosphate + H(+). It carries out the reaction D-methionine(out) + ATP + H2O = D-methionine(in) + ADP + phosphate + H(+). In terms of biological role, part of the ABC transporter complex MetNIQ involved in methionine import. Responsible for energy coupling to the transport system. This Corynebacterium efficiens (strain DSM 44549 / YS-314 / AJ 12310 / JCM 11189 / NBRC 100395) protein is Methionine import ATP-binding protein MetN.